Reading from the N-terminus, the 141-residue chain is Large ribosomal subunit protein uL16 (141 aa).

Positions 1–20 are disordered; the sequence is MLMPKRTKYRKQQKGRNRGK.

This sequence belongs to the universal ribosomal protein uL16 family. As to quaternary structure, part of the 50S ribosomal subunit.

In terms of biological role, binds 23S rRNA and is also seen to make contacts with the A and possibly P site tRNAs. The sequence is that of Large ribosomal subunit protein uL16 from Nautilia profundicola (strain ATCC BAA-1463 / DSM 18972 / AmH).